The sequence spans 365 residues: MDRRSFITKAAVGGAAASALAAPALAQSAPKVTWRLASSFPKSLDTIFGGAEVLSKMLSEATDGNFQIQVFSAGELVPGLQAADAVTEGTVECCHTVGYYYWGKDPTFALAAAVPFSLSARGINAWHYHGGGIDLYNEFLSQHNIVAFPGGNTGVQMGGWFRREINTVADMQGLKMRVGGFAGKVMERLGVVPQQIAGGDIYPALEKGTIDATEWVGPYDDEKLGFFKVAPYYYYPGWWEGGPTVHFMFNKSAYEGLTPTYQSLLRTACHAADANMLQLYDWKNPTAIKSLVAQGTQLRPFSPEILQACFEAANEVYAEMEASNPAFKKIWDSIKAFRSEHYTWAQIAEYNYDTFMMVQQNAGKL.

Residues 1 to 26 constitute a signal peptide (tat-type signal); that stretch reads MDRRSFITKAAVGGAAASALAAPALA. Substrate is bound by residues 99–100, glutamine 156, and arginine 177; that span reads YY. Residue glutamine 156 participates in Na(+) binding. Na(+) is bound by residues glutamate 214, tryptophan 215, and glutamate 240.

This sequence belongs to the bacterial solute-binding protein 7 family. Homodimer. The complex comprises the extracytoplasmic solute receptor protein TakP, and the two transmembrane proteins TakQ and TakM. Post-translationally, predicted to be exported by the Tat system. The position of the signal peptide cleavage has not been experimentally proven.

Its subcellular location is the periplasm. Part of the tripartite ATP-independent periplasmic (TRAP) transport system TakPQM involved in the uptake of alpha-keto acids. This protein specifically binds alpha-keto acids including pyruvate, oxobutyrate, oxovalerate and 4-methyl-2-oxovalerate. Ligand-binding affinity increases with the increasing chain length of the aliphatic backbone of the ligand. Is not able to bind alpha-ketoglutarate. In Cereibacter sphaeroides (strain ATCC 17023 / DSM 158 / JCM 6121 / CCUG 31486 / LMG 2827 / NBRC 12203 / NCIMB 8253 / ATH 2.4.1.) (Rhodobacter sphaeroides), this protein is Alpha-keto acid-binding periplasmic protein TakP.